Consider the following 475-residue polypeptide: uncharacterized protein (475 aa).

This is an uncharacterized protein from Schizosaccharomyces pombe (strain 972 / ATCC 24843) (Fission yeast).